The sequence spans 635 residues: 1-deoxy-D-xylulose-5-phosphate synthase (635 aa).

Residues His79 and 120–122 (GHS) each bind thiamine diphosphate. Mg(2+) is bound at residue Asp151. Thiamine diphosphate contacts are provided by residues 152 to 153 (GA), Asn182, Tyr290, and Glu372. Asn182 lines the Mg(2+) pocket.

Belongs to the transketolase family. DXPS subfamily. As to quaternary structure, homodimer. It depends on Mg(2+) as a cofactor. Thiamine diphosphate serves as cofactor.

The catalysed reaction is D-glyceraldehyde 3-phosphate + pyruvate + H(+) = 1-deoxy-D-xylulose 5-phosphate + CO2. It functions in the pathway metabolic intermediate biosynthesis; 1-deoxy-D-xylulose 5-phosphate biosynthesis; 1-deoxy-D-xylulose 5-phosphate from D-glyceraldehyde 3-phosphate and pyruvate: step 1/1. Functionally, catalyzes the acyloin condensation reaction between C atoms 2 and 3 of pyruvate and glyceraldehyde 3-phosphate to yield 1-deoxy-D-xylulose-5-phosphate (DXP). The sequence is that of 1-deoxy-D-xylulose-5-phosphate synthase from Stenotrophomonas maltophilia (strain K279a).